The following is a 403-amino-acid chain: Flavohemoprotein (403 aa).

The region spanning 1–138 (MLTPEQKAIV…LADLMIGIEK (138 aa)) is the Globin domain. His85 is a heme b binding site. Residues Tyr95 and Glu137 each act as charge relay system in the active site. Residues 149–403 (GGWRDFRPFR…SQSFAPVILG (255 aa)) form a reductase region. The FAD-binding FR-type domain occupies 152–257 (RDFRPFRVAR…HVPAGDFVLQ (106 aa)). FAD contacts are provided by residues Tyr190 and 206-209 (RQYS). 269-274 (GVGITP) is a binding site for NADP(+). Residue 390–393 (TFGP) participates in FAD binding.

The protein belongs to the globin family. Two-domain flavohemoproteins subfamily. In the C-terminal section; belongs to the flavoprotein pyridine nucleotide cytochrome reductase family. Heme b serves as cofactor. The cofactor is FAD.

The catalysed reaction is 2 nitric oxide + NADPH + 2 O2 = 2 nitrate + NADP(+) + H(+). It catalyses the reaction 2 nitric oxide + NADH + 2 O2 = 2 nitrate + NAD(+) + H(+). The protein is Flavohemoprotein of Deinococcus radiodurans (strain ATCC 13939 / DSM 20539 / JCM 16871 / CCUG 27074 / LMG 4051 / NBRC 15346 / NCIMB 9279 / VKM B-1422 / R1).